A 103-amino-acid polypeptide reads, in one-letter code: Large ribosomal subunit protein uL24 (103 aa).

Belongs to the universal ribosomal protein uL24 family. As to quaternary structure, part of the 50S ribosomal subunit.

In terms of biological role, one of two assembly initiator proteins, it binds directly to the 5'-end of the 23S rRNA, where it nucleates assembly of the 50S subunit. Its function is as follows. One of the proteins that surrounds the polypeptide exit tunnel on the outside of the subunit. This is Large ribosomal subunit protein uL24 from Oceanobacillus iheyensis (strain DSM 14371 / CIP 107618 / JCM 11309 / KCTC 3954 / HTE831).